The chain runs to 320 residues: Nicotianamine synthase 1 (320 aa).

Belongs to the nicotianamine synthase (NAS)-like family. As to expression, in shoots and roots.

The enzyme catalyses 3 S-adenosyl-L-methionine = nicotianamine + 3 S-methyl-5'-thioadenosine + 3 H(+). Its function is as follows. Synthesizes nicotianamine, a polyamine which serves as a sensor for the physiological iron status within the plant, and/or might be involved in the transport of iron. The sequence is that of Nicotianamine synthase 1 (NAS1) from Arabidopsis thaliana (Mouse-ear cress).